A 193-amino-acid polypeptide reads, in one-letter code: Ion-translocating oxidoreductase complex subunit A (193 aa).

The next 6 membrane-spanning stretches (helical) occupy residues 5 to 25 (LLLLVGTVLVNNFVLVKFLGL), 39 to 59 (MGMGLATTFVLTLASVCAWAV), 62 to 82 (FILVPLGLAYLRTLTFILVIA), 102 to 122 (LLGIFLPLITTNCAVLGVALL), 134 to 154 (AVYGFSAAVGFSLVMVLFAAI), and 171 to 191 (SIALITAGLMSLAFMGFSGLV).

This sequence belongs to the NqrDE/RnfAE family. In terms of assembly, the complex is composed of six subunits: RnfA, RnfB, RnfC, RnfD, RnfE and RnfG.

The protein localises to the cell inner membrane. Functionally, part of a membrane-bound complex that couples electron transfer with translocation of ions across the membrane. This Edwardsiella ictaluri (strain 93-146) protein is Ion-translocating oxidoreductase complex subunit A.